The primary structure comprises 628 residues: Chaperone protein HtpG (628 aa).

The tract at residues methionine 1–arginine 334 is a; substrate-binding. The b stretch occupies residues glutamate 335–lysine 550. A c region spans residues methionine 551–glycine 628.

This sequence belongs to the heat shock protein 90 family. Homodimer.

It localises to the cytoplasm. In terms of biological role, molecular chaperone. Has ATPase activity. The protein is Chaperone protein HtpG of Rhodopseudomonas palustris (strain BisB5).